The primary structure comprises 589 residues: Acyl-CoA ligase SID4 (589 aa).

Positions 12-20 (RLQQTLNHI) match the PTS2-type peroxisomal targeting signal motif. ATP contacts are provided by residues 228-236 (TSGSTGNPK), 367-372 (SSYGLT), Asp458, and Arg473. Thr372 is a binding site for substrate. Residues 481–483 (GGE), Lys547, and 555–557 (FGL) each bind CoA. Lys572 lines the ATP pocket.

Belongs to the ATP-dependent AMP-binding enzyme family.

Its subcellular location is the peroxisome. Its pathway is siderophore biosynthesis. Its function is as follows. Acyl-CoA ligase; part of the gene cluster that mediates the biosynthesis of hydroxamate-containing siderophores that play a critical role in virulence via intracellular iron acquisition during macrophage infection. This chain is Acyl-CoA ligase SID4, found in Ajellomyces capsulatus (Darling's disease fungus).